The chain runs to 186 residues: Large ribosomal subunit protein bL12c (186 aa).

Positions 1–11 (MASTLSTITLR) are enriched in polar residues. The interval 1–24 (MASTLSTITLRSPSPSTATSTHAS) is disordered. The transit peptide at 1–53 (MASTLSTITLRSPSPSTATSTHASIPFPKKTLEFPIRTPKLQNRRATFLRPLA) directs the protein to the chloroplast. The segment covering 12–24 (SPSPSTATSTHAS) has biased composition (low complexity).

The protein belongs to the bacterial ribosomal protein bL12 family.

It localises to the plastid. Its subcellular location is the chloroplast. The protein is Large ribosomal subunit protein bL12c of Nicotiana sylvestris (Wood tobacco).